Reading from the N-terminus, the 247-residue chain is METIIEVKNLVKNYGDKQILKNISFNINKGEIISIIGESGAGKSTLMRCLNGLEGINSGSIKFYDTDITKLKEKEKNSIKKQMAYVFQDLNIIDNMYVIENVLVPFLNRKNFIQVLFNQFSKQEYERALYCLEKVGISKLAYTKAKYLSGGEKQRVAIARSLAPNVDLILADEPISSLDEKNSTQIMEIFKRINIKKNKTIILNLHNVEIAKKFSDKILALKNGEIFFYKKSAEVNEDDIRKVYQTS.

The ABC transporter domain maps to 5-246 (IEVKNLVKNY…EDDIRKVYQT (242 aa)). 37–44 (GESGAGKS) is an ATP binding site.

It belongs to the ABC transporter superfamily. Phosphonates importer (TC 3.A.1.9.1) family. In terms of assembly, the complex is composed of two ATP-binding proteins (PhnC), two transmembrane proteins (PhnE) and a solute-binding protein (PhnD).

Its subcellular location is the cell inner membrane. It carries out the reaction phosphonate(out) + ATP + H2O = phosphonate(in) + ADP + phosphate + H(+). Functionally, part of the ABC transporter complex PhnCDE involved in phosphonates import. Responsible for energy coupling to the transport system. This Fusobacterium nucleatum subsp. nucleatum (strain ATCC 25586 / DSM 15643 / BCRC 10681 / CIP 101130 / JCM 8532 / KCTC 2640 / LMG 13131 / VPI 4355) protein is Phosphonates import ATP-binding protein PhnC.